Here is a 150-residue protein sequence, read N- to C-terminus: Urease accessory protein UreE (150 aa).

The protein belongs to the UreE family.

Its subcellular location is the cytoplasm. Its function is as follows. Involved in urease metallocenter assembly. Binds nickel. Probably functions as a nickel donor during metallocenter assembly. This Streptococcus vestibularis protein is Urease accessory protein UreE.